The following is a 104-amino-acid chain: Large ribosomal subunit protein uL23 (104 aa).

Belongs to the universal ribosomal protein uL23 family. In terms of assembly, part of the 50S ribosomal subunit. Contacts protein L29, and trigger factor when it is bound to the ribosome.

Its function is as follows. One of the early assembly proteins it binds 23S rRNA. One of the proteins that surrounds the polypeptide exit tunnel on the outside of the ribosome. Forms the main docking site for trigger factor binding to the ribosome. This is Large ribosomal subunit protein uL23 from Cupriavidus metallidurans (strain ATCC 43123 / DSM 2839 / NBRC 102507 / CH34) (Ralstonia metallidurans).